The primary structure comprises 534 residues: Peptide chain release factor 3 (534 aa).

A tr-type G domain is found at 9 to 278; that stretch reads ARRRTFAIIS…FFVEHAPPPQ (270 aa). Residues 18–25, 86–90, and 140–143 each bind GTP; these read SHPDAGKT, DTPGH, and NKLD.

This sequence belongs to the TRAFAC class translation factor GTPase superfamily. Classic translation factor GTPase family. PrfC subfamily.

It is found in the cytoplasm. In terms of biological role, increases the formation of ribosomal termination complexes and stimulates activities of RF-1 and RF-2. It binds guanine nucleotides and has strong preference for UGA stop codons. It may interact directly with the ribosome. The stimulation of RF-1 and RF-2 is significantly reduced by GTP and GDP, but not by GMP. This Xanthomonas campestris pv. campestris (strain 8004) protein is Peptide chain release factor 3.